The following is a 158-amino-acid chain: Ribonuclease H (158 aa).

Positions 5-146 (MRKQIEIFTD…CDQLAKQGAE (142 aa)) constitute an RNase H type-1 domain. Positions 14, 52, 74, and 138 each coordinate Mg(2+).

The protein belongs to the RNase H family. Monomer. Requires Mg(2+) as cofactor.

It localises to the cytoplasm. It carries out the reaction Endonucleolytic cleavage to 5'-phosphomonoester.. Endonuclease that specifically degrades the RNA of RNA-DNA hybrids. The sequence is that of Ribonuclease H from Mannheimia succiniciproducens (strain KCTC 0769BP / MBEL55E).